We begin with the raw amino-acid sequence, 114 residues long: uncharacterized protein (114 aa).

The 109-residue stretch at 6 to 114 (IFGKIIRREI…GGRSLAWPPG (109 aa)) folds into the HIT domain. Residues 98-102 (HLHIH) carry the Histidine triad motif motif.

This is an uncharacterized protein from Synechococcus elongatus (strain ATCC 33912 / PCC 7942 / FACHB-805) (Anacystis nidulans R2).